Consider the following 336-residue polypeptide: uncharacterized protein (336 aa).

This is an uncharacterized protein from Enterobacteria phage T4 (Bacteriophage T4).